Reading from the N-terminus, the 142-residue chain is Mediator of RNA polymerase II transcription subunit 21 (142 aa).

The stretch at 87–131 (AEEQLSRIDSLQKKLIQVEGEKIEAIKRKESLTKDIEELINEFTE) forms a coiled coil.

It belongs to the Mediator complex subunit 21 family. As to quaternary structure, component of the Mediator complex.

Its subcellular location is the nucleus. Component of the Mediator complex, a coactivator involved in the regulated transcription of nearly all RNA polymerase II-dependent genes. Mediator functions as a bridge to convey information from gene-specific regulatory proteins to the basal RNA polymerase II transcription machinery. Mediator is recruited to promoters by direct interactions with regulatory proteins and serves as a scaffold for the assembly of a functional preinitiation complex with RNA polymerase II and the general transcription factors. The polypeptide is Mediator of RNA polymerase II transcription subunit 21 (SRB7) (Eremothecium gossypii (strain ATCC 10895 / CBS 109.51 / FGSC 9923 / NRRL Y-1056) (Yeast)).